We begin with the raw amino-acid sequence, 451 residues long: Probable carboxypeptidase PMAA_093910 (451 aa).

A signal peptide spans 1–19 (MKVSSLLPSVLLLVGATRA). Asn149 carries an N-linked (GlcNAc...) asparagine glycan. Asp171 contacts Zn(2+). Residue Glu203 is the Proton acceptor of the active site. Zn(2+) is bound at residue Glu204. The N-linked (GlcNAc...) asparagine glycan is linked to Asn354.

Belongs to the peptidase M20A family. The cofactor is Zn(2+).

Its subcellular location is the secreted. The sequence is that of Probable carboxypeptidase PMAA_093910 from Talaromyces marneffei (strain ATCC 18224 / CBS 334.59 / QM 7333) (Penicillium marneffei).